A 620-amino-acid polypeptide reads, in one-letter code: Chaperone protein HscA homolog (620 aa).

It belongs to the heat shock protein 70 family.

Chaperone involved in the maturation of iron-sulfur cluster-containing proteins. Has a low intrinsic ATPase activity which is markedly stimulated by HscB. The protein is Chaperone protein HscA homolog of Herminiimonas arsenicoxydans.